A 285-amino-acid chain; its full sequence is Acetyl-coenzyme A carboxylase carboxyl transferase subunit beta (285 aa).

The CoA carboxyltransferase N-terminal domain occupies isoleucine 29–lysine 285. Zn(2+) contacts are provided by cysteine 33, cysteine 36, cysteine 52, and cysteine 55. A C4-type zinc finger spans residues cysteine 33–cysteine 55.

This sequence belongs to the AccD/PCCB family. As to quaternary structure, acetyl-CoA carboxylase is a heterohexamer composed of biotin carboxyl carrier protein (AccB), biotin carboxylase (AccC) and two subunits each of ACCase subunit alpha (AccA) and ACCase subunit beta (AccD). The cofactor is Zn(2+).

Its subcellular location is the cytoplasm. The enzyme catalyses N(6)-carboxybiotinyl-L-lysyl-[protein] + acetyl-CoA = N(6)-biotinyl-L-lysyl-[protein] + malonyl-CoA. It participates in lipid metabolism; malonyl-CoA biosynthesis; malonyl-CoA from acetyl-CoA: step 1/1. Component of the acetyl coenzyme A carboxylase (ACC) complex. Biotin carboxylase (BC) catalyzes the carboxylation of biotin on its carrier protein (BCCP) and then the CO(2) group is transferred by the transcarboxylase to acetyl-CoA to form malonyl-CoA. The polypeptide is Acetyl-coenzyme A carboxylase carboxyl transferase subunit beta (Staphylococcus aureus (strain Mu3 / ATCC 700698)).